Reading from the N-terminus, the 130-residue chain is S-adenosylmethionine decarboxylase proenzyme (130 aa).

The active-site Schiff-base intermediate with substrate; via pyruvic acid is the Ser-63. Ser-63 is subject to Pyruvic acid (Ser); by autocatalysis. His-68 acts as the Proton acceptor; for processing activity in catalysis. Cys-83 functions as the Proton donor; for catalytic activity in the catalytic mechanism.

Belongs to the prokaryotic AdoMetDC family. Type 1 subfamily. As to quaternary structure, heterotetramer of two alpha and two beta chains arranged as a dimer of alpha/beta heterodimers. Pyruvate serves as cofactor. Post-translationally, is synthesized initially as an inactive proenzyme. Formation of the active enzyme involves a self-maturation process in which the active site pyruvoyl group is generated from an internal serine residue via an autocatalytic post-translational modification. Two non-identical subunits are generated from the proenzyme in this reaction, and the pyruvate is formed at the N-terminus of the alpha chain, which is derived from the carboxyl end of the proenzyme. The post-translation cleavage follows an unusual pathway, termed non-hydrolytic serinolysis, in which the side chain hydroxyl group of the serine supplies its oxygen atom to form the C-terminus of the beta chain, while the remainder of the serine residue undergoes an oxidative deamination to produce ammonia and the pyruvoyl group blocking the N-terminus of the alpha chain.

The catalysed reaction is S-adenosyl-L-methionine + H(+) = S-adenosyl 3-(methylsulfanyl)propylamine + CO2. It participates in amine and polyamine biosynthesis; S-adenosylmethioninamine biosynthesis; S-adenosylmethioninamine from S-adenosyl-L-methionine: step 1/1. Its function is as follows. Catalyzes the decarboxylation of S-adenosylmethionine to S-adenosylmethioninamine (dcAdoMet), the propylamine donor required for the synthesis of the polyamines spermine and spermidine from the diamine putrescine. In Thermosipho africanus (strain TCF52B), this protein is S-adenosylmethionine decarboxylase proenzyme.